Here is a 105-residue protein sequence, read N- to C-terminus: RxLR effector protein PITG_18670 (105 aa).

The N-terminal stretch at 1–21 is a signal peptide; it reads MRSIFYFALAFAALTCSNASA. Residues 39-57 carry the RxLR-dEER motif; that stretch reads RSLRVAGQEVARGDRGEEI.

The protein belongs to the RxLR effector family.

It is found in the secreted. The protein localises to the host nucleus. The protein resides in the host nucleolus. It localises to the host cytoplasm. Effector that enhances P.infestans colonization of Nicotiana benthamiana leaves. The protein is RxLR effector protein PITG_18670 of Phytophthora infestans (strain T30-4) (Potato late blight agent).